We begin with the raw amino-acid sequence, 513 residues long: Putative ATP-dependent RNA helicase QP509L (513 aa).

Positions 110–262 (KKLLSPYGRF…KIIIHHLGQP (153 aa)) constitute a Helicase ATP-binding domain. ATP is bound at residue 123–130 (LNTGLGKT). The DEAH box motif lies at 215–218 (DEAH).

It belongs to the DEAD box helicase family. DEAH subfamily.

It catalyses the reaction ATP + H2O = ADP + phosphate + H(+). The sequence is that of Putative ATP-dependent RNA helicase QP509L from Ornithodoros (relapsing fever ticks).